The primary structure comprises 453 residues: Bifunctional protein GlmU (453 aa).

The tract at residues 1-226 is pyrophosphorylase; sequence MVAVAILAAG…YLEITGINDR (226 aa). UDP-N-acetyl-alpha-D-glucosamine contacts are provided by residues 7–10, K21, Q73, and 78–79; these read LAAG and GT. D103 provides a ligand contact to Mg(2+). Positions 140, 155, 170, and 224 each coordinate UDP-N-acetyl-alpha-D-glucosamine. Residue N224 coordinates Mg(2+). Positions 227 to 247 are linker; sequence KQLAMANGILQNRVKDHWMAQ. An N-acetyltransferase region spans residues 248–453; it reads GVTLIDPDSI…EWKKTIESKK (206 aa). UDP-N-acetyl-alpha-D-glucosamine is bound by residues R329 and K347. Residue H359 is the Proton acceptor of the active site. 2 residues coordinate UDP-N-acetyl-alpha-D-glucosamine: Y362 and N373. Residues A376, 382-383, A419, and R436 contribute to the acetyl-CoA site; that span reads NY.

It in the N-terminal section; belongs to the N-acetylglucosamine-1-phosphate uridyltransferase family. The protein in the C-terminal section; belongs to the transferase hexapeptide repeat family. Homotrimer. Mg(2+) serves as cofactor.

The protein resides in the cytoplasm. The enzyme catalyses alpha-D-glucosamine 1-phosphate + acetyl-CoA = N-acetyl-alpha-D-glucosamine 1-phosphate + CoA + H(+). It carries out the reaction N-acetyl-alpha-D-glucosamine 1-phosphate + UTP + H(+) = UDP-N-acetyl-alpha-D-glucosamine + diphosphate. It participates in nucleotide-sugar biosynthesis; UDP-N-acetyl-alpha-D-glucosamine biosynthesis; N-acetyl-alpha-D-glucosamine 1-phosphate from alpha-D-glucosamine 6-phosphate (route II): step 2/2. It functions in the pathway nucleotide-sugar biosynthesis; UDP-N-acetyl-alpha-D-glucosamine biosynthesis; UDP-N-acetyl-alpha-D-glucosamine from N-acetyl-alpha-D-glucosamine 1-phosphate: step 1/1. Its pathway is bacterial outer membrane biogenesis; LPS lipid A biosynthesis. Functionally, catalyzes the last two sequential reactions in the de novo biosynthetic pathway for UDP-N-acetylglucosamine (UDP-GlcNAc). The C-terminal domain catalyzes the transfer of acetyl group from acetyl coenzyme A to glucosamine-1-phosphate (GlcN-1-P) to produce N-acetylglucosamine-1-phosphate (GlcNAc-1-P), which is converted into UDP-GlcNAc by the transfer of uridine 5-monophosphate (from uridine 5-triphosphate), a reaction catalyzed by the N-terminal domain. The sequence is that of Bifunctional protein GlmU from Rippkaea orientalis (strain PCC 8801 / RF-1) (Cyanothece sp. (strain PCC 8801)).